The primary structure comprises 172 residues: S-ribosylhomocysteine lyase (172 aa).

3 residues coordinate Fe cation: H54, H58, and C128.

Belongs to the LuxS family. As to quaternary structure, homodimer. Fe cation serves as cofactor.

The enzyme catalyses S-(5-deoxy-D-ribos-5-yl)-L-homocysteine = (S)-4,5-dihydroxypentane-2,3-dione + L-homocysteine. Involved in the synthesis of autoinducer 2 (AI-2) which is secreted by bacteria and is used to communicate both the cell density and the metabolic potential of the environment. The regulation of gene expression in response to changes in cell density is called quorum sensing. Catalyzes the transformation of S-ribosylhomocysteine (RHC) to homocysteine (HC) and 4,5-dihydroxy-2,3-pentadione (DPD). In Vibrio parahaemolyticus serotype O3:K6 (strain RIMD 2210633), this protein is S-ribosylhomocysteine lyase.